A 266-amino-acid polypeptide reads, in one-letter code: Hydroxyethylthiazole kinase (266 aa).

Position 46 (Met46) interacts with substrate. ATP is bound by residues Lys122 and Thr166. Substrate is bound at residue Gly193.

It belongs to the Thz kinase family. Requires Mg(2+) as cofactor.

It carries out the reaction 5-(2-hydroxyethyl)-4-methylthiazole + ATP = 4-methyl-5-(2-phosphooxyethyl)-thiazole + ADP + H(+). It functions in the pathway cofactor biosynthesis; thiamine diphosphate biosynthesis; 4-methyl-5-(2-phosphoethyl)-thiazole from 5-(2-hydroxyethyl)-4-methylthiazole: step 1/1. Its function is as follows. Catalyzes the phosphorylation of the hydroxyl group of 4-methyl-5-beta-hydroxyethylthiazole (THZ). The polypeptide is Hydroxyethylthiazole kinase (Caldivirga maquilingensis (strain ATCC 700844 / DSM 13496 / JCM 10307 / IC-167)).